The following is a 198-amino-acid chain: MTLYKIGEIVYKNNNNIILESKGEGNLVTICDNSRYSKGEKLKLYLYEVKNDYIQQTYGFKTFKERLLFTDLISIDKIGPKTAMLILDQNWELVANLIAEGDWKEISKINYISDKSAKLICVELKDKWAKIIQNKEVKKFDDITNIKELKQTLNKLGFKASDIDYAVNNISSTKELDLMVEESINLITTQMHANNQTT.

The interval 1 to 61 is domain I; that stretch reads MTLYKIGEIV…DYIQQTYGFK (61 aa). The domain II stretch occupies residues 62-139; it reads TFKERLLFTD…KIIQNKEVKK (78 aa). Residues 140–144 are flexible linker; sequence FDDIT. The segment at 144–198 is domain III; the sequence is TNIKELKQTLNKLGFKASDIDYAVNNISSTKELDLMVEESINLITTQMHANNQTT.

Belongs to the RuvA family. As to quaternary structure, homotetramer. Forms an RuvA(8)-RuvB(12)-Holliday junction (HJ) complex. HJ DNA is sandwiched between 2 RuvA tetramers; dsDNA enters through RuvA and exits via RuvB. An RuvB hexamer assembles on each DNA strand where it exits the tetramer. Each RuvB hexamer is contacted by two RuvA subunits (via domain III) on 2 adjacent RuvB subunits; this complex drives branch migration. In the full resolvosome a probable DNA-RuvA(4)-RuvB(12)-RuvC(2) complex forms which resolves the HJ.

The protein localises to the cytoplasm. In terms of biological role, the RuvA-RuvB-RuvC complex processes Holliday junction (HJ) DNA during genetic recombination and DNA repair, while the RuvA-RuvB complex plays an important role in the rescue of blocked DNA replication forks via replication fork reversal (RFR). RuvA specifically binds to HJ cruciform DNA, conferring on it an open structure. The RuvB hexamer acts as an ATP-dependent pump, pulling dsDNA into and through the RuvAB complex. HJ branch migration allows RuvC to scan DNA until it finds its consensus sequence, where it cleaves and resolves the cruciform DNA. This Mycoplasmopsis synoviae (strain 53) (Mycoplasma synoviae) protein is Holliday junction branch migration complex subunit RuvA.